A 32-amino-acid chain; its full sequence is Acetolactate synthase, catabolic (32 aa).

Belongs to the TPP enzyme family. In terms of assembly, homodimer.

It catalyses the reaction 2 pyruvate + H(+) = (2S)-2-acetolactate + CO2. Its pathway is polyol metabolism; (R,R)-butane-2,3-diol biosynthesis; (R,R)-butane-2,3-diol from pyruvate: step 1/3. In Klebsiella aerogenes (Enterobacter aerogenes), this protein is Acetolactate synthase, catabolic (budB).